The primary structure comprises 83 residues: Large ribosomal subunit protein eL43 (83 aa).

Positions 38, 41, 56, and 59 each coordinate Zn(2+). Residues 38–59 (CPVCGRKAVKRISTGIWQCQKC) form a C4-type zinc finger.

The protein belongs to the eukaryotic ribosomal protein eL43 family. Putative zinc-binding subfamily. In terms of assembly, part of the 50S ribosomal subunit. It depends on Zn(2+) as a cofactor.

Binds to the 23S rRNA. The protein is Large ribosomal subunit protein eL43 of Pyrococcus furiosus (strain ATCC 43587 / DSM 3638 / JCM 8422 / Vc1).